We begin with the raw amino-acid sequence, 283 residues long: Coiled-coil domain-containing protein 42 homolog (283 aa).

2 coiled-coil regions span residues 31 to 139 (ATQL…LQRY) and 174 to 204 (QDLR…HRVS).

This sequence belongs to the CFAP73 family.

The chain is Coiled-coil domain-containing protein 42 homolog from Monosiga brevicollis (Choanoflagellate).